We begin with the raw amino-acid sequence, 174 residues long: Protein GrpE (174 aa).

The interval 1 to 35 (MAQDIKNEEVEEVQEEEVVKTAEETTPEKSELDLA) is disordered. Basic and acidic residues predominate over residues 17-35 (EVVKTAEETTPEKSELDLA).

Belongs to the GrpE family. In terms of assembly, homodimer.

The protein resides in the cytoplasm. Functionally, participates actively in the response to hyperosmotic and heat shock by preventing the aggregation of stress-denatured proteins, in association with DnaK and GrpE. It is the nucleotide exchange factor for DnaK and may function as a thermosensor. Unfolded proteins bind initially to DnaJ; upon interaction with the DnaJ-bound protein, DnaK hydrolyzes its bound ATP, resulting in the formation of a stable complex. GrpE releases ADP from DnaK; ATP binding to DnaK triggers the release of the substrate protein, thus completing the reaction cycle. Several rounds of ATP-dependent interactions between DnaJ, DnaK and GrpE are required for fully efficient folding. The chain is Protein GrpE from Streptococcus pneumoniae serotype 4 (strain ATCC BAA-334 / TIGR4).